A 238-amino-acid chain; its full sequence is Orotidine 5'-phosphate decarboxylase (238 aa).

Substrate-binding positions include Asp-10, Lys-32, 59 to 68, Thr-122, Arg-184, Gln-193, Gly-213, and Arg-214; that span reads DLKLHDIPNT. The Proton donor role is filled by Lys-61.

The protein belongs to the OMP decarboxylase family. Type 1 subfamily. As to quaternary structure, homodimer.

The enzyme catalyses orotidine 5'-phosphate + H(+) = UMP + CO2. It participates in pyrimidine metabolism; UMP biosynthesis via de novo pathway; UMP from orotate: step 2/2. Functionally, catalyzes the decarboxylation of orotidine 5'-monophosphate (OMP) to uridine 5'-monophosphate (UMP). This is Orotidine 5'-phosphate decarboxylase from Bacillus mycoides (strain KBAB4) (Bacillus weihenstephanensis).